The primary structure comprises 972 residues: 116 kDa U5 small nuclear ribonucleoprotein component (972 aa).

Methionine 1 carries the N-acetylmethionine modification. Residues 1–54 form a disordered region; the sequence is MDTDLYDEFGNYIGPELDSDEDDDELGRETKDLDEMDDDDDDDDVGDHDDDHPG. 2 stretches are compositionally biased toward acidic residues: residues 17–26 and 34–48; these read LDSDEDDDEL and DEMDDDDDDDDVGDH. Serine 19 bears the Phosphoserine mark. Lysine 64 is covalently cross-linked (Glycyl lysine isopeptide (Lys-Gly) (interchain with G-Cter in SUMO1); alternate). Lysine 64 participates in a covalent cross-link: Glycyl lysine isopeptide (Lys-Gly) (interchain with G-Cter in SUMO2); alternate. Threonine 86 carries the phosphothreonine modification. Positions 127 to 409 constitute a tr-type G domain; that stretch reads ELIRNVTLCG…GIHLTKEELK (283 aa). GTP contacts are provided by residues 136–143, 204–208, and 258–261; these read GHLHHGKT, DTPGH, and NKID.

This sequence belongs to the TRAFAC class translation factor GTPase superfamily. Classic translation factor GTPase family. EF-G/EF-2 subfamily. Component of the U5 snRNP and the U4/U6-U5 tri-snRNP complex, a building block of the spliceosome. The U4/U6-U5 tri-snRNP complex is composed of the U4, U6 and U5 snRNAs and at least PRPF3, PRPF4, PRPF6, PRPF8, PRPF31, SNRNP200, TXNL4A, SNRNP40, DDX23, CD2BP2, PPIH, SNU13, EFTUD2, SART1 and USP39. Component of the pre-catalytic, catalytic and post-catalytic spliceosome complexes. Component of the minor spliceosome, which splices U12-type introns. Within this complex, interacts with CRIPT. Interacts with ERBB4 and PRPF8. Interacts with PIH1D1. Interacts with RPAP3 and URI1 in a ZNHIT2-dependent manner. Interacts with NRDE2. Interacts with FAM50A. Interacts with UBL5.

Its subcellular location is the nucleus. Functionally, required for pre-mRNA splicing as component of the spliceosome, including pre-catalytic, catalytic and post-catalytic spliceosomal complexes. Component of the U5 snRNP and the U4/U6-U5 tri-snRNP complex, a building block of the spliceosome. As a component of the minor spliceosome, involved in the splicing of U12-type introns in pre-mRNAs. The chain is 116 kDa U5 small nuclear ribonucleoprotein component (EFTUD2) from Homo sapiens (Human).